The sequence spans 115 residues: Large ribosomal subunit protein bL19 (115 aa).

The protein belongs to the bacterial ribosomal protein bL19 family.

Its function is as follows. This protein is located at the 30S-50S ribosomal subunit interface and may play a role in the structure and function of the aminoacyl-tRNA binding site. This Clostridium kluyveri (strain ATCC 8527 / DSM 555 / NBRC 12016 / NCIMB 10680 / K1) protein is Large ribosomal subunit protein bL19.